Consider the following 112-residue polypeptide: Hydrogenase maturation factor HypA (112 aa).

Histidine 2 is a Ni(2+) binding site. Zn(2+) contacts are provided by cysteine 73, cysteine 76, cysteine 88, and cysteine 91.

It belongs to the HypA/HybF family.

Functionally, involved in the maturation of [NiFe] hydrogenases. Required for nickel insertion into the metal center of the hydrogenase. The polypeptide is Hydrogenase maturation factor HypA (Synechococcus elongatus (strain ATCC 33912 / PCC 7942 / FACHB-805) (Anacystis nidulans R2)).